Consider the following 251-residue polypeptide: Triosephosphate isomerase (251 aa).

9–11 (NWK) provides a ligand contact to substrate. The active-site Electrophile is the His95. Catalysis depends on Glu167, which acts as the Proton acceptor. Substrate contacts are provided by residues Gly173, Ser213, and 234–235 (GG). Phosphoserine is present on Ser213.

The protein belongs to the triosephosphate isomerase family. As to quaternary structure, homodimer.

The protein localises to the cytoplasm. It catalyses the reaction D-glyceraldehyde 3-phosphate = dihydroxyacetone phosphate. It participates in carbohydrate biosynthesis; gluconeogenesis. Its pathway is carbohydrate degradation; glycolysis; D-glyceraldehyde 3-phosphate from glycerone phosphate: step 1/1. In terms of biological role, involved in the gluconeogenesis. Catalyzes stereospecifically the conversion of dihydroxyacetone phosphate (DHAP) to D-glyceraldehyde-3-phosphate (G3P). This is Triosephosphate isomerase from Bacillus cereus (strain G9842).